We begin with the raw amino-acid sequence, 508 residues long: Probable monogalactosyldiacylglycerol synthase 3, chloroplastic (508 aa).

Residues 1 to 60 (MAASSSSSSSMASPRGRSIRETVLETVAAYHQQQRMRRKFRKSLSYAGELSSAGRARGEG) constitute a chloroplast transit peptide. A disordered region spans residues 51–79 (SSAGRARGEGGASSSASTTSLCGPDEDDE).

Belongs to the glycosyltransferase 28 family.

It is found in the plastid. The protein resides in the chloroplast membrane. The enzyme catalyses a 1,2-diacyl-sn-glycerol + UDP-alpha-D-galactose = a 1,2-diacyl-3-O-(beta-D-galactosyl)-sn-glycerol + UDP + H(+). Functionally, involved in the synthesis of the major structural component of photosynthetic membranes. This Oryza sativa subsp. japonica (Rice) protein is Probable monogalactosyldiacylglycerol synthase 3, chloroplastic (MGD3).